Reading from the N-terminus, the 434-residue chain is Chaperone SurA (434 aa).

The signal sequence occupies residues 1–22; the sequence is MKPSKHLIFALFALAISQPTMA. PpiC domains follow at residues 173–274 and 283–383; these read DVEY…KIMD and IEEV…QLEE.

The protein resides in the periplasm. The catalysed reaction is [protein]-peptidylproline (omega=180) = [protein]-peptidylproline (omega=0). Its function is as follows. Chaperone involved in the correct folding and assembly of outer membrane proteins. Recognizes specific patterns of aromatic residues and the orientation of their side chains, which are found more frequently in integral outer membrane proteins. May act in both early periplasmic and late outer membrane-associated steps of protein maturation. In Shewanella sp. (strain MR-7), this protein is Chaperone SurA.